The following is a 98-amino-acid chain: Small ribosomal subunit protein bS20 (98 aa).

A disordered region spans residues 76 to 98 (HPNNGARKKSRLASKLKPIEQTA).

It belongs to the bacterial ribosomal protein bS20 family.

Functionally, binds directly to 16S ribosomal RNA. This chain is Small ribosomal subunit protein bS20, found in Trichormus variabilis (strain ATCC 29413 / PCC 7937) (Anabaena variabilis).